The chain runs to 779 residues: Lon protease (779 aa).

The 194-residue stretch at 10–203 folds into the Lon N-terminal domain; it reads LPLLPLRGLL…ILLTILNNER (194 aa). 355-362 contributes to the ATP binding site; it reads GPPGVGKT. Positions 591–772 constitute a Lon proteolytic domain; sequence KDQVGSVTGL…DEVLRHALTK (182 aa). Active-site residues include Ser678 and Lys721.

Belongs to the peptidase S16 family. In terms of assembly, homohexamer. Organized in a ring with a central cavity.

The protein localises to the cytoplasm. It carries out the reaction Hydrolysis of proteins in presence of ATP.. Its function is as follows. ATP-dependent serine protease that mediates the selective degradation of mutant and abnormal proteins as well as certain short-lived regulatory proteins. Required for cellular homeostasis and for survival from DNA damage and developmental changes induced by stress. Degrades polypeptides processively to yield small peptide fragments that are 5 to 10 amino acids long. Binds to DNA in a double-stranded, site-specific manner. The protein is Lon protease of Brevibacillus choshinensis.